The chain runs to 374 residues: Homoserine O-acetyltransferase (374 aa).

In terms of domain architecture, AB hydrolase-1 spans 45 to 353; the sequence is NAILVLHALT…PYGHDAFLIE (309 aa). Residue Ser-151 is the Nucleophile of the active site. Arg-220 provides a ligand contact to substrate. Active-site residues include Asp-314 and His-347. Asp-348 is a binding site for substrate.

Belongs to the AB hydrolase superfamily. MetX family. As to quaternary structure, homodimer.

The protein localises to the cytoplasm. The catalysed reaction is L-homoserine + acetyl-CoA = O-acetyl-L-homoserine + CoA. The protein operates within amino-acid biosynthesis; L-methionine biosynthesis via de novo pathway; O-acetyl-L-homoserine from L-homoserine: step 1/1. Its function is as follows. Transfers an acetyl group from acetyl-CoA to L-homoserine, forming acetyl-L-homoserine. The sequence is that of Homoserine O-acetyltransferase from Moorella thermoacetica (strain ATCC 39073 / JCM 9320).